The following is a 226-amino-acid chain: Urease accessory protein UreF (226 aa).

This sequence belongs to the UreF family. As to quaternary structure, ureD, UreF and UreG form a complex that acts as a GTP-hydrolysis-dependent molecular chaperone, activating the urease apoprotein by helping to assemble the nickel containing metallocenter of UreC. The UreE protein probably delivers the nickel.

Its subcellular location is the cytoplasm. In terms of biological role, required for maturation of urease via the functional incorporation of the urease nickel metallocenter. The sequence is that of Urease accessory protein UreF from Nitrosospira multiformis (strain ATCC 25196 / NCIMB 11849 / C 71).